The primary structure comprises 386 residues: O-methyltransferase 12 (386 aa).

The S-adenosyl-L-homocysteine site is built by Ser207, Gly231, Asp254, Asp274, and Lys288. Residue Asp254 coordinates S-adenosyl-L-methionine. His292 functions as the Proton acceptor in the catalytic mechanism.

The protein belongs to the class I-like SAM-binding methyltransferase superfamily. Cation-independent O-methyltransferase family. As to quaternary structure, homodimer. Expressed at high levels in all tissues.

The catalysed reaction is 4-hydroxy-3,5-dimethoxyphenethylamine + S-adenosyl-L-methionine = mescaline + S-adenosyl-L-homocysteine + H(+). It carries out the reaction dopamine + S-adenosyl-L-methionine = 4-methoxytyramine + S-adenosyl-L-homocysteine + H(+). It functions in the pathway aromatic compound metabolism. It participates in alkaloid biosynthesis. In terms of biological role, O-methyltransferase participating in the biosynthesis of natural products derived from phenylethylamine, including mescaline, a natural hallucinogen potentially used in psychotherapeutic treatments. Catalyzes the O-methylation of dopamine, 4-hydroxy-3,5-dimethoxyphenethylamine, 4,5-dihydroxy-3-methoxyphenethylamine and N-methyl-4,5-dihydroxy-3-methoxyphenethylamine. Also involved in the conversion of N-methyl-4-hydroxy-3,5-dimethoxyphenethylamine to N-methylmescaline. This Lophophora williamsii (Peyote) protein is O-methyltransferase 12.